Here is a 670-residue protein sequence, read N- to C-terminus: Leucine zipper putative tumor suppressor 2 (670 aa).

Disordered regions lie at residues 1–52 (MAIV…GVPG), 92–131 (NEDFRTESPPSPSSDVEDPREHQAHNAHLRGPPPKLIPVS), and 150–323 (PVLP…PSDE). Residues 1-333 (MAIVQTLPVP…ALLHCVLEGK (333 aa)) form a required for centrosomal localization region. The span at 187-199 (ASSSSSSSSSSAA) shows a compositional bias: low complexity. Polar residues predominate over residues 213 to 233 (PSGTLSDSGRNSLSSLPTYST). Low complexity-rich tracts occupy residues 242-251 (SPGGHLPSHG) and 260-310 (PARG…GGDR). 2 positions are modified to phosphoserine: Ser-249 and Ser-296. Residues 311 to 321 (SPPPPPPPPPS) show a composition bias toward pro residues. The stretch at 329–650 (VLEGKLRDRE…LELEARELAD (322 aa)) forms a coiled coil. The segment at 448-670 (SGEISLLKQQ…CLEEITATEI (223 aa)) is sufficient for interaction with CTNNB1. The tract at residues 451–670 (ISLLKQQLKE…CLEEITATEI (220 aa)) is sufficient for interaction with KATNB1 and for inhibition of katanin-mediated microtubule severing. Ser-571 bears the Phosphoserine mark. Positions 632 to 641 (LEQELQQLSL) match the Nuclear export signal motif.

The protein belongs to the LZTS2 family. In terms of assembly, interacts with CTNNB1. Interacts with KATNB1. Also interacts with gamma-tubulin and KIF23.

It localises to the cytoplasm. The protein localises to the cytoskeleton. It is found in the microtubule organizing center. Its subcellular location is the centrosome. Its function is as follows. Negative regulator of katanin-mediated microtubule severing and release from the centrosome. Required for central spindle formation and the completion of cytokinesis. May negatively regulate axonal outgrowth by preventing the formation of microtubule bundles that are necessary for transport within the elongating axon. Negative regulator of the Wnt signaling pathway. Represses beta-catenin-mediated transcriptional activation by promoting the nuclear exclusion of beta-catenin. The chain is Leucine zipper putative tumor suppressor 2 (Lzts2) from Rattus norvegicus (Rat).